The primary structure comprises 375 residues: Serine protease 23 (375 aa).

The signal sequence occupies residues 1–23; that stretch reads MAGTPGHPIFLLLLLRAIGQVSP. Asparagine 93 is a glycosylation site (N-linked (GlcNAc...) asparagine). The cysteines at positions 153 and 169 are disulfide-linked. The active-site Charge relay system is histidine 168. An N-linked (GlcNAc...) asparagine glycan is attached at asparagine 199. Active-site charge relay system residues include aspartate 232 and serine 308.

This sequence belongs to the peptidase S1 family.

It localises to the secreted. The sequence is that of Serine protease 23 (PRSS23) from Bos taurus (Bovine).